The chain runs to 225 residues: Octanoyltransferase (225 aa).

The 178-residue stretch at 42–219 folds into the BPL/LPL catalytic domain; the sequence is KNRQASMIFC…SICSALEYIN (178 aa). Substrate is bound by residues 79–86, 149–151, and 162–164; these read RGGKITWH, AIG, and GFA. Cysteine 180 (acyl-thioester intermediate) is an active-site residue.

It belongs to the LipB family.

The protein resides in the cytoplasm. The catalysed reaction is octanoyl-[ACP] + L-lysyl-[protein] = N(6)-octanoyl-L-lysyl-[protein] + holo-[ACP] + H(+). It functions in the pathway protein modification; protein lipoylation via endogenous pathway; protein N(6)-(lipoyl)lysine from octanoyl-[acyl-carrier-protein]: step 1/2. In terms of biological role, catalyzes the transfer of endogenously produced octanoic acid from octanoyl-acyl-carrier-protein onto the lipoyl domains of lipoate-dependent enzymes. Lipoyl-ACP can also act as a substrate although octanoyl-ACP is likely to be the physiological substrate. This is Octanoyltransferase from Tropheryma whipplei (strain TW08/27) (Whipple's bacillus).